Consider the following 96-residue polypeptide: MKTALLLFFALVFIAFETEACRPGALTVAPDGCNMCTCLSNGKLGRCTHDLICPPRMFKLECEPGKPFKNDCNDCICSEDGLTAKCTRKLCIHKKP.

The signal sequence occupies residues 1-20; it reads MKTALLLFFALVFIAFETEA. 3 cysteine pairs are disulfide-bonded: C21/C38, C33/C53, and C36/C47. Pacifastin domains follow at residues 21–55 and 59–94; these read CRPG…ICPP and KLEC…CIHK. Residues 54 to 56 are pro-Pro-Arg motif necessary for proteolytic processing; it reads PPR. 3 disulfides stabilise this stretch: C62–C77, C72–C91, and C75–C86.

This sequence belongs to the protease inhibitor I19 family. In terms of tissue distribution, expressed by the venom gland.

Its subcellular location is the secreted. In terms of biological role, inhibits trypsin activity and prophenoloxidase (PPO) activation, an enzyme essential for both clotting and insect innate immune responses. It does not inhibit activity of chymotrypsin and protease K, and has no effect on phenoloxidase (PO) activity. This is U-reduvitoxin-Pr12a from Platymeris rhadamanthus (Red spot assassin bug).